The primary structure comprises 383 residues: Na(+)/H(+) antiporter (383 aa).

12 helical membrane-spanning segments follow: residues 1 to 21, 24 to 44, 51 to 71, 83 to 103, 112 to 132, 145 to 165, 186 to 206, 216 to 236, 262 to 282, 291 to 311, 323 to 343, and 353 to 373; these read MEFIGILCLILVATTIGSHIS, FGIPAVIGQLLVGVLLGQAGL, ILVHDFSEIGVILLMFLAGLE, PGMFVALLGILFPVFFGWLTG, EAIFFGIILAATSVSISVEVL, TILGASVVDDILVVLVLSFSL, LFYFLFIFLLVKWIAPFLMSL, IIIMSLVICLGMSYLADLIGL, VEALGYAVFIPVFFVSVGLEV, ILFILILTLVAILTKLIGGYI, ALMVGAGMISRGEMALIILQI, and HYYSPLVIVVLLSTLISPLIL.

This sequence belongs to the monovalent cation:proton antiporter 2 (CPA2) transporter (TC 2.A.37) family.

The protein localises to the cell membrane. In terms of biological role, na(+)/H(+) antiporter that extrudes sodium in exchange for external protons. Can also transport lithium. The chain is Na(+)/H(+) antiporter (napA) from Enterococcus hirae.